Reading from the N-terminus, the 333-residue chain is Cell shape-determining protein Mbl (333 aa).

Residues 12–14, 156–158, 204–207, and 284–287 each bind ATP; these read TAN, GGT, EDIK, and GGAL.

This sequence belongs to the FtsA/MreB family. Forms polymers.

Its subcellular location is the cytoplasm. In terms of biological role, forms membrane-associated dynamic filaments that are essential for cell shape determination. Acts by regulating cell wall synthesis and cell elongation, and thus cell shape. A feedback loop between cell geometry and Mbl localization may maintain elongated cell shape by targeting cell wall growth to regions of negative cell wall curvature. This chain is Cell shape-determining protein Mbl, found in Bacillus cereus (strain ATCC 10987 / NRS 248).